A 217-amino-acid polypeptide reads, in one-letter code: ATP phosphoribosyltransferase (217 aa).

This sequence belongs to the ATP phosphoribosyltransferase family. Short subfamily. Heteromultimer composed of HisG and HisZ subunits.

It is found in the cytoplasm. It carries out the reaction 1-(5-phospho-beta-D-ribosyl)-ATP + diphosphate = 5-phospho-alpha-D-ribose 1-diphosphate + ATP. It functions in the pathway amino-acid biosynthesis; L-histidine biosynthesis; L-histidine from 5-phospho-alpha-D-ribose 1-diphosphate: step 1/9. In terms of biological role, catalyzes the condensation of ATP and 5-phosphoribose 1-diphosphate to form N'-(5'-phosphoribosyl)-ATP (PR-ATP). Has a crucial role in the pathway because the rate of histidine biosynthesis seems to be controlled primarily by regulation of HisG enzymatic activity. The chain is ATP phosphoribosyltransferase from Burkholderia orbicola (strain AU 1054).